The primary structure comprises 457 residues: Argininosuccinate lyase (457 aa).

Belongs to the lyase 1 family. Argininosuccinate lyase subfamily.

The protein resides in the cytoplasm. The catalysed reaction is 2-(N(omega)-L-arginino)succinate = fumarate + L-arginine. The protein operates within amino-acid biosynthesis; L-arginine biosynthesis; L-arginine from L-ornithine and carbamoyl phosphate: step 3/3. The sequence is that of Argininosuccinate lyase from Yersinia pseudotuberculosis serotype O:3 (strain YPIII).